Here is a 140-residue protein sequence, read N- to C-terminus: Small ribosomal subunit protein uS19 (140 aa).

Belongs to the universal ribosomal protein uS19 family.

In terms of biological role, protein S19 forms a complex with S13 that binds strongly to the 16S ribosomal RNA. This Natronomonas pharaonis (strain ATCC 35678 / DSM 2160 / CIP 103997 / JCM 8858 / NBRC 14720 / NCIMB 2260 / Gabara) (Halobacterium pharaonis) protein is Small ribosomal subunit protein uS19.